The chain runs to 151 residues: Lipoprotein signal peptidase (151 aa).

Transmembrane regions (helical) follow at residues 54 to 74 (GQMW…IYLI) and 83 to 103 (LLKI…IDRL). Catalysis depends on residues D110 and D125. Residues 120 to 140 (IFNIADSALTIGVGLFLLNIL) form a helical membrane-spanning segment.

Belongs to the peptidase A8 family.

The protein localises to the cell membrane. It carries out the reaction Release of signal peptides from bacterial membrane prolipoproteins. Hydrolyzes -Xaa-Yaa-Zaa-|-(S,diacylglyceryl)Cys-, in which Xaa is hydrophobic (preferably Leu), and Yaa (Ala or Ser) and Zaa (Gly or Ala) have small, neutral side chains.. It functions in the pathway protein modification; lipoprotein biosynthesis (signal peptide cleavage). Its function is as follows. This protein specifically catalyzes the removal of signal peptides from prolipoproteins. This chain is Lipoprotein signal peptidase, found in Shouchella clausii (strain KSM-K16) (Alkalihalobacillus clausii).